The primary structure comprises 59 residues: Three-finger toxin MS1 (59 aa).

Disulfide bonds link Cys-3–Cys-22, Cys-17–Cys-39, Cys-41–Cys-52, and Cys-53–Cys-58.

The protein belongs to the three-finger toxin family. Short-chain subfamily. Type I alpha-neurotoxin sub-subfamily. As to expression, expressed by the venom gland.

The protein resides in the secreted. Its function is as follows. Produces peripheral paralysis by blocking neuromuscular transmission at the postsynaptic site. Binds to and inhibits the endogenous nicotinic acetylcholine receptors (nAChR) in human rhabdomyosarcoma TE 671 cell line with an IC(50) of 48.2 mM. This neurotoxin is lethal to mice by intraperitoneal injection and to zebrafish by injection at the back of the dorsolateral region. The chain is Three-finger toxin MS1 from Micrurus surinamensis (Surinam coral snake).